The primary structure comprises 159 residues: 17 kDa surface antigen (159 aa).

The first 19 residues, 1 to 19 (MKIISKIIVILLAASMLQA), serve as a signal peptide directing secretion. Cysteine 20 is lipidated: N-palmitoyl cysteine. Cysteine 20 carries S-diacylglycerol cysteine lipidation.

This sequence belongs to the rickettsiale 17 kDa surface antigen family.

It is found in the cell outer membrane. The chain is 17 kDa surface antigen (omp) from Rickettsia bellii.